The sequence spans 380 residues: Endopolygalacturonase AN8327 (380 aa).

The signal sequence occupies residues Met-1–Ala-19. Positions Thr-20–Lys-35 are excised as a propeptide. Cys-39 and Cys-57 form a disulfide bridge. 7 PbH1 repeats span residues Leu-147–Gly-169, Cys-170–Glu-200, Ser-201–Ser-222, Gly-223–Ser-243, Val-252–Ala-273, Ile-281–Gln-303, and Thr-315–Gly-338. Asp-215 acts as the Proton donor in catalysis. Cys-217 and Cys-233 are disulfide-bonded. His-237 is an active-site residue. An N-linked (GlcNAc...) asparagine glycan is attached at Asn-327. Cys-345 and Cys-350 are disulfide-bonded. A glycan (N-linked (GlcNAc...) asparagine) is linked at Asn-352. Residues Cys-369 and Cys-378 are joined by a disulfide bond.

Belongs to the glycosyl hydrolase 28 family.

The protein localises to the secreted. It carries out the reaction (1,4-alpha-D-galacturonosyl)n+m + H2O = (1,4-alpha-D-galacturonosyl)n + (1,4-alpha-D-galacturonosyl)m.. In terms of biological role, involved in maceration and soft-rotting of plant tissue. Hydrolyzes the 1,4-alpha glycosidic bonds of de-esterified pectate in the smooth region of the plant cell wall. This is Endopolygalacturonase AN8327 from Emericella nidulans (strain FGSC A4 / ATCC 38163 / CBS 112.46 / NRRL 194 / M139) (Aspergillus nidulans).